The sequence spans 163 residues: K88 minor fimbrial subunit FaeF (163 aa).

The first 22 residues, 1–22, serve as a signal peptide directing secretion; sequence MKKTMMAAALVLSALSIQSALA.

It is found in the fimbrium. In terms of biological role, K88 minor fimbrial subunit, plays an essential role in the biogenesis of the K88 fimbriae. required at some step in the initiation and/or elongation of the K88 fimbriae. This Escherichia coli protein is K88 minor fimbrial subunit FaeF (faeF).